The sequence spans 86 residues: uncharacterized protein (86 aa).

Residues 1-31 form the signal peptide; that stretch reads MKQKLLLSGLAVSTVGITSYLLKDPSNRQKA. The tract at residues 46-69 is disordered; sequence PDMETFPVDKAGHPDPQDIEDNKM. The segment covering 55-69 has biased composition (basic and acidic residues); it reads KAGHPDPQDIEDNKM.

This is an uncharacterized protein from Bacillus subtilis (strain 168).